The chain runs to 810 residues: Janus kinase and microtubule-interacting protein 2 (810 aa).

3 coiled-coil regions span residues 13-102, 148-178, and 207-244; these read EALI…EMSR, ERLKLLQEIADLKTAKKQVDEALSNMIQADK, and RRLMDEIKAKDRIIFSLEKELETQTGYVQKLQLQKEAL. The span at 261-274 shows a compositional bias: basic and acidic residues; the sequence is PKREIPGRAGDGSE. 2 disordered regions span residues 261–280 and 437–465; these read PKREIPGRAGDGSEHCSSPD and YDEDSMDSETSSMASFRTDRTPATPDDDL. Positions 280 to 419 form a coiled coil; sequence DLRRNQKRIA…REKLIRRRKH (140 aa). Coiled-coil stretches lie at residues 468–597 and 664–808; these read SLAA…RERR and EKWI…SNRK.

It belongs to the JAKMIP family. Highly expressed in brain, moderately expressed in thymus, spleen and lung, and weakly expressed in kidney, liver and peripheral blood lymphocytes. Also expressed in adrenal and pituitary glands, as well as testis.

The protein resides in the golgi apparatus. The sequence is that of Janus kinase and microtubule-interacting protein 2 (JAKMIP2) from Homo sapiens (Human).